The sequence spans 24 residues: Brevinin-1Bc (24 aa).

A disulfide bridge connects residues C18 and C24.

In terms of tissue distribution, expressed by the skin glands.

The protein localises to the secreted. Antibacterial activity against Gram-positive bacterium S.aureus. This chain is Brevinin-1Bc, found in Lithobates berlandieri (Rio Grande leopard frog).